The primary structure comprises 296 residues: Nitrogenase iron protein (296 aa).

10-17 (GKGGIGKS) serves as a coordination point for ATP. Cysteine 98 provides a ligand contact to [4Fe-4S] cluster. Arginine 101 carries the post-translational modification ADP-ribosylarginine; by dinitrogenase reductase ADP-ribosyltransferase. Residue cysteine 133 participates in [4Fe-4S] cluster binding.

It belongs to the NifH/BchL/ChlL family. In terms of assembly, homodimer. Requires [4Fe-4S] cluster as cofactor. Post-translationally, the reversible ADP-ribosylation of Arg-101 inactivates the nitrogenase reductase and regulates nitrogenase activity.

The catalysed reaction is N2 + 8 reduced [2Fe-2S]-[ferredoxin] + 16 ATP + 16 H2O = H2 + 8 oxidized [2Fe-2S]-[ferredoxin] + 2 NH4(+) + 16 ADP + 16 phosphate + 6 H(+). Its function is as follows. The key enzymatic reactions in nitrogen fixation are catalyzed by the nitrogenase complex, which has 2 components: the iron protein and the molybdenum-iron protein. The protein is Nitrogenase iron protein of Magnetococcus marinus (strain ATCC BAA-1437 / JCM 17883 / MC-1).